The following is a 619-amino-acid chain: Coagulation factor X-activating enzyme heavy chain (619 aa).

A signal peptide spans 1 to 20; sequence MMQVLLVTISLAVFPYQGSS. The propeptide occupies 21 to 188; the sequence is IILESGNVND…SDKPIKKASQ (168 aa). In terms of domain architecture, Peptidase M12B spans 199–393; it reads IFIELVIIVD…YKPKCIFNPP (195 aa). Residues cysteine 215 and cysteine 251 are joined by a disulfide bond. Asparagine 216 and asparagine 257 each carry an N-linked (GlcNAc...) (complex) asparagine glycan. 3 disulfides stabilise this stretch: cysteine 308–cysteine 388, cysteine 348–cysteine 372, and cysteine 350–cysteine 355. Histidine 333 lines the Zn(2+) pocket. Glutamate 334 is a catalytic residue. Residues histidine 337 and histidine 343 each coordinate Zn(2+). N-linked (GlcNAc...) (complex) asparagine glycans are attached at residues asparagine 351 and asparagine 371. A Disintegrin domain is found at 401-487; the sequence is PPVCGNEIWE…ECPRDQLQQN (87 aa). Ca(2+)-binding residues include valine 403, asparagine 406, isoleucine 408, glutamate 410, glutamate 413, and aspartate 416. Intrachain disulfides connect cysteine 404/cysteine 433, cysteine 415/cysteine 428, cysteine 417/cysteine 423, cysteine 427/cysteine 450, cysteine 441/cysteine 447, cysteine 446/cysteine 472, cysteine 459/cysteine 479, cysteine 466/cysteine 498, cysteine 491/cysteine 503, cysteine 510/cysteine 560, cysteine 525/cysteine 571, cysteine 538/cysteine 548, cysteine 555/cysteine 597, and cysteine 591/cysteine 603. A D/ECD-tripeptide motif is present at residues 465–467; the sequence is ECD. Aspartate 467, valine 468, glutamate 470, aspartate 482, and glutamine 483 together coordinate Ca(2+).

It belongs to the venom metalloproteinase (M12B) family. P-III subfamily. P-IIId sub-subfamily. As to quaternary structure, heterotrimer; disulfide-linked. The heterotrimer consists of 1 heavy chain and 2 light chains (lectins): LC1 and LC2. It depends on Zn(2+) as a cofactor. Post-translationally, N-glycosylated; probably required for conformation. Removal of easily accessible sugars does not change its functional capacity, but removal of the core sugars with N-glycanase causes a virtually complete loss of enzyme activity, apparently as a result of major conformational changes in the molecule. Not O-glycosylated. Expressed by the venom gland.

It localises to the secreted. It carries out the reaction Specifically activates several components of the blood clotting system, including coagulation factor X, coagulation factor IX and protein C by cleavage of Arg-|-Xaa bonds. Has no action on insulin B chain.. In terms of biological role, catalytic subunit of blood coagulation factor X-activating enzyme. Activates coagulation factor X (F10) by cleaving the Arg-Ile bond and is also able to activate coagulation factor IX (F9) and protein S (PROS1) by specific cleavage of Arg-Ile and Arg-Val bonds. The chain is Coagulation factor X-activating enzyme heavy chain from Daboia siamensis (Eastern Russel's viper).